The primary structure comprises 426 residues: Serine--tRNA ligase (426 aa).

229-231 is an L-serine binding site; it reads TAE. Position 260-262 (260-262) interacts with ATP; it reads RSE. Glu-283 is a binding site for L-serine. 347–350 provides a ligand contact to ATP; it reads EIAS. Position 383 (Ser-383) interacts with L-serine.

Belongs to the class-II aminoacyl-tRNA synthetase family. Type-1 seryl-tRNA synthetase subfamily. As to quaternary structure, homodimer. The tRNA molecule binds across the dimer.

The protein resides in the cytoplasm. The catalysed reaction is tRNA(Ser) + L-serine + ATP = L-seryl-tRNA(Ser) + AMP + diphosphate + H(+). It carries out the reaction tRNA(Sec) + L-serine + ATP = L-seryl-tRNA(Sec) + AMP + diphosphate + H(+). Its pathway is aminoacyl-tRNA biosynthesis; selenocysteinyl-tRNA(Sec) biosynthesis; L-seryl-tRNA(Sec) from L-serine and tRNA(Sec): step 1/1. Its function is as follows. Catalyzes the attachment of serine to tRNA(Ser). Is also able to aminoacylate tRNA(Sec) with serine, to form the misacylated tRNA L-seryl-tRNA(Sec), which will be further converted into selenocysteinyl-tRNA(Sec). This is Serine--tRNA ligase from Rickettsia bellii (strain OSU 85-389).